The chain runs to 554 residues: MLO-like protein 14 (554 aa).

The Extracellular segment spans residues 1 to 13 (MREETEPSERTLG). Residues 14-34 (LTPTWSVATVLTIFVFVSLIV) form a helical membrane-spanning segment. The Cytoplasmic portion of the chain corresponds to 35 to 63 (ERSIHRLSNWLQKTKRKPLFAALEKMKEE). The chain crosses the membrane as a helical span at residues 64–84 (LMLLGFISLLLTATSSTIANI). Topologically, residues 85 to 158 (CVSSSFHNDR…SYEGMEQLHR (74 aa)) are extracellular. Residues 159-179 (FIFIMAVTHVTYSCLTMLLAI) traverse the membrane as a helical segment. Over 180–281 (VKIHRWRIWE…MIRSMEEEFQ (102 aa)) the chain is Cytoplasmic. The chain crosses the membrane as a helical span at residues 282–302 (KIVGVSGPLWGFVVGFMLFNI). A topological domain (extracellular) is located at residue lysine 303. A helical transmembrane segment spans residues 304 to 324 (GSNLYFWLAIIPITLVLLVGA). Residues 325–366 (KLQHVIATLALENASITEYASGIKLRPRDELFWFKKPELLLS) lie on the Cytoplasmic side of the membrane. Residues 367 to 387 (LIHFIQFQNAFELASFFWFWW) form a helical membrane-spanning segment. Over 388–406 (QFGYNSCFLRNHLLVYLRL) the chain is Extracellular. A helical membrane pass occupies residues 407–427 (ILGFSGQFLCSYSTLPLYALV). The Cytoplasmic segment spans residues 428-554 (TQMGTNYKAA…SSSLPMRREC (127 aa)). Residues 441-462 (QRVRETINGWGKATRRKRRHGL) form a calmodulin-binding region.

It belongs to the MLO family.

The protein localises to the membrane. Functionally, may be involved in modulation of pathogen defense and leaf cell death. Activity seems to be regulated by Ca(2+)-dependent calmodulin binding and seems not to require heterotrimeric G proteins. This chain is MLO-like protein 14 (MLO14), found in Arabidopsis thaliana (Mouse-ear cress).